The following is a 50-amino-acid chain: Tubulin alpha chain (50 aa).

Asn-28 lines the GTP pocket. Residue Glu-40 is part of the active site.

This sequence belongs to the tubulin family. Dimer of alpha and beta chains. A typical microtubule is a hollow water-filled tube with an outer diameter of 25 nm and an inner diameter of 15 nM. Alpha-beta heterodimers associate head-to-tail to form protofilaments running lengthwise along the microtubule wall with the beta-tubulin subunit facing the microtubule plus end conferring a structural polarity. Microtubules usually have 13 protofilaments but different protofilament numbers can be found in some organisms and specialized cells. The cofactor is Mg(2+).

It localises to the cytoplasm. The protein localises to the cytoskeleton. The enzyme catalyses GTP + H2O = GDP + phosphate + H(+). Its function is as follows. Tubulin is the major constituent of microtubules, a cylinder consisting of laterally associated linear protofilaments composed of alpha- and beta-tubulin heterodimers. Microtubules grow by the addition of GTP-tubulin dimers to the microtubule end, where a stabilizing cap forms. Below the cap, tubulin dimers are in GDP-bound state, owing to GTPase activity of alpha-tubulin. The sequence is that of Tubulin alpha chain from Populus euphratica (Euphrates poplar).